A 517-amino-acid chain; its full sequence is Superoxide-generating NADPH oxidase heavy chain subunit A (517 aa).

Residues 1–19 (MRLPTKEEIQRYWVNEGNK) lie on the Cytoplasmic side of the membrane. A helical membrane pass occupies residues 20-40 (LILVILYTLGNIAAFVYTFVH). Residues 41–62 (YYNSPAFEVVGYGVCFARGCAQ) lie on the Extracellular side of the membrane. The Ferric oxidoreductase domain maps to 58–201 (RGCAQLLKLN…LFVVFFGLLV (144 aa)). Residues 63–83 (LLKLNCALILVPVLRNLLSFL) form a helical membrane-spanning segment. Residues 84 to 97 (RGTFLNNYVPFDKN) lie on the Cytoplasmic side of the membrane. A helical membrane pass occupies residues 98 to 118 (IVFHKLIAWVICFATFGHVMA). The heme site is built by His-101 and His-115. The Extracellular portion of the chain corresponds to 119–149 (HFNNFRLYQDITPQEYKRILGIDYPNLTPIK). Residues 150–170 (YAFATLAGWTGHVVCIVMVLM) traverse the membrane as a helical segment. The Cytoplasmic portion of the chain corresponds to 171-184 (YTSAVESIRRPMFE). A helical membrane pass occupies residues 185 to 205 (GFWYTHHLFVVFFGLLVVHGL). Heme is bound by residues His-190 and His-203. Position 206 (His-206) is a topological domain, extracellular. The chain crosses the membrane as a helical span at residues 207–227 (SILEPTSFWKWVIGPCALYIV). The Cytoplasmic portion of the chain corresponds to 228–517 (ERLIRLLRSK…CRFHYNKENF (290 aa)). Residues 229–349 (RLIRLLRSKK…DGPFGAASEE (121 aa)) form the FAD-binding FR-type domain. 283–289 (HPFTITS) provides a ligand contact to FAD.

Composed of a heavy chain and a light chain. FAD serves as cofactor.

Its subcellular location is the membrane. Functionally, critical component of the membrane-bound oxidase that generates superoxide. It is the terminal component of a respiratory chain that transfers single electrons from cytoplasmic NADPH across the plasma membrane to molecular oxygen on the exterior. The protein is Superoxide-generating NADPH oxidase heavy chain subunit A (noxA) of Dictyostelium discoideum (Social amoeba).